A 597-amino-acid polypeptide reads, in one-letter code: DNA polymerase III subunit gamma/tau (597 aa).

44–51 lines the ATP pocket; sequence GERGTGKT. Zn(2+) is bound by residues Cys63, Cys72, Cys75, and Cys78.

The protein belongs to the DnaX/STICHEL family. In terms of assembly, DNA polymerase III contains a core (composed of alpha, epsilon and theta chains) that associates with a tau subunit. This core dimerizes to form the POLIII' complex. PolIII' associates with the gamma complex (composed of gamma, delta, delta', psi and chi chains) and with the beta chain to form the complete DNA polymerase III complex.

The catalysed reaction is DNA(n) + a 2'-deoxyribonucleoside 5'-triphosphate = DNA(n+1) + diphosphate. In terms of biological role, DNA polymerase III is a complex, multichain enzyme responsible for most of the replicative synthesis in bacteria. This DNA polymerase also exhibits 3' to 5' exonuclease activity. This is DNA polymerase III subunit gamma/tau (dnaX) from Mycoplasma genitalium (strain ATCC 33530 / DSM 19775 / NCTC 10195 / G37) (Mycoplasmoides genitalium).